Reading from the N-terminus, the 517-residue chain is Crotonobetaine/carnitine--CoA ligase (517 aa).

The protein belongs to the ATP-dependent AMP-binding enzyme family.

It catalyses the reaction 4-(trimethylamino)butanoate + ATP + CoA = 4-(trimethylamino)butanoyl-CoA + AMP + diphosphate. The enzyme catalyses crotonobetaine + ATP + CoA = crotonobetainyl-CoA + AMP + diphosphate. The catalysed reaction is (R)-carnitine + ATP + CoA = (R)-carnitinyl-CoA + AMP + diphosphate. The protein operates within amine and polyamine metabolism; carnitine metabolism. Catalyzes the transfer of CoA to carnitine, generating the initial carnitinyl-CoA needed for the CaiB reaction cycle. Also has activity toward crotonobetaine and gamma-butyrobetaine. The protein is Crotonobetaine/carnitine--CoA ligase of Escherichia coli O127:H6 (strain E2348/69 / EPEC).